A 329-amino-acid chain; its full sequence is Trans-1,2-dihydrobenzene-1,2-diol dehydrogenase (329 aa).

The protein belongs to the Gfo/Idh/MocA family. Homodimer. Lens, liver and small intestine.

It catalyses the reaction (1R,2R)-1,2-dihydrobenzene-1,2-diol + NADP(+) = catechol + NADPH + H(+). The catalysed reaction is D-xylose + NADP(+) = D-xylono-1,5-lactone + NADPH + H(+). With respect to regulation, stimulated by various salts. The sequence is that of Trans-1,2-dihydrobenzene-1,2-diol dehydrogenase (DHDH) from Oryctolagus cuniculus (Rabbit).